The following is a 482-amino-acid chain: Long chain base biosynthesis protein 1c (482 aa).

The chain crosses the membrane as a helical span at residues 33–53; that stretch reads FGIHIDGHLVVEGLLIAAILF.

The protein belongs to the class-II pyridoxal-phosphate-dependent aminotransferase family. In terms of assembly, heterodimer with LCB2. Component of the serine palmitoyltransferase (SPT) complex, composed of LCB1 and LCB2. Pyridoxal 5'-phosphate serves as cofactor.

The protein resides in the endoplasmic reticulum membrane. It carries out the reaction L-serine + hexadecanoyl-CoA + H(+) = 3-oxosphinganine + CO2 + CoA. It functions in the pathway lipid metabolism; sphingolipid metabolism. Functionally, serine palmitoyltransferase (SPT). The heterodimer formed with LCB2 constitutes the catalytic core. In Oryza sativa subsp. japonica (Rice), this protein is Long chain base biosynthesis protein 1c.